The following is a 76-amino-acid chain: Omega-scoloptoxin(13)-Ssm2b (76 aa).

Positions 1–22 are cleaved as a signal peptide; that stretch reads MAYIYALIFAIVVCMNTDVIQA.

Belongs to the scoloptoxin-13 family. Contains 3 disulfide bonds. In terms of tissue distribution, expressed by the venom gland.

The protein localises to the secreted. In terms of biological role, inhibits voltage-gated calcium channel (Cav) currents. The chain is Omega-scoloptoxin(13)-Ssm2b from Scolopendra mutilans (Chinese red-headed centipede).